The sequence spans 146 residues: Transcriptional regulator MraZ (146 aa).

2 SpoVT-AbrB domains span residues 5–47 (EYYH…TITD) and 76–119 (SIQV…AKEK).

The protein belongs to the MraZ family. Forms oligomers.

The protein resides in the cytoplasm. The protein localises to the nucleoid. The sequence is that of Transcriptional regulator MraZ from Dictyoglomus thermophilum (strain ATCC 35947 / DSM 3960 / H-6-12).